The sequence spans 313 residues: Glyoxylate/hydroxypyruvate reductase A (313 aa).

Arg-228 is an active-site residue. The active-site Proton donor is His-276.

It belongs to the D-isomer specific 2-hydroxyacid dehydrogenase family. GhrA subfamily.

The protein resides in the cytoplasm. The catalysed reaction is glycolate + NADP(+) = glyoxylate + NADPH + H(+). The enzyme catalyses (R)-glycerate + NAD(+) = 3-hydroxypyruvate + NADH + H(+). It carries out the reaction (R)-glycerate + NADP(+) = 3-hydroxypyruvate + NADPH + H(+). Functionally, catalyzes the NADPH-dependent reduction of glyoxylate and hydroxypyruvate into glycolate and glycerate, respectively. The sequence is that of Glyoxylate/hydroxypyruvate reductase A from Photorhabdus laumondii subsp. laumondii (strain DSM 15139 / CIP 105565 / TT01) (Photorhabdus luminescens subsp. laumondii).